The following is a 322-amino-acid chain: uncharacterized protein (322 aa).

Transmembrane regions (helical) follow at residues 159 to 179, 203 to 223, 234 to 254, 267 to 287, and 296 to 316; these read GIIF…MLYL, MNIP…YIWL, GGIL…RVGL, FEGS…LIPY, and TLLS…FFAW.

Its subcellular location is the membrane. This is an uncharacterized protein from Dictyostelium discoideum (Social amoeba).